Reading from the N-terminus, the 299-residue chain is tRNA-cytidine(32) 2-sulfurtransferase (299 aa).

A PP-loop motif motif is present at residues 56–61; that stretch reads SGGKDS. 3 residues coordinate [4Fe-4S] cluster: C131, C134, and C222.

The protein belongs to the TtcA family. As to quaternary structure, homodimer. Mg(2+) is required as a cofactor. It depends on [4Fe-4S] cluster as a cofactor.

It localises to the cytoplasm. It carries out the reaction cytidine(32) in tRNA + S-sulfanyl-L-cysteinyl-[cysteine desulfurase] + AH2 + ATP = 2-thiocytidine(32) in tRNA + L-cysteinyl-[cysteine desulfurase] + A + AMP + diphosphate + H(+). It functions in the pathway tRNA modification. Catalyzes the ATP-dependent 2-thiolation of cytidine in position 32 of tRNA, to form 2-thiocytidine (s(2)C32). The sulfur atoms are provided by the cysteine/cysteine desulfurase (IscS) system. The chain is tRNA-cytidine(32) 2-sulfurtransferase from Xylella fastidiosa (strain 9a5c).